The primary structure comprises 362 residues: Peptide chain release factor 1 (362 aa).

At Gln235 the chain carries N5-methylglutamine.

It belongs to the prokaryotic/mitochondrial release factor family. Methylated by PrmC. Methylation increases the termination efficiency of RF1.

It is found in the cytoplasm. In terms of biological role, peptide chain release factor 1 directs the termination of translation in response to the peptide chain termination codons UAG and UAA. This is Peptide chain release factor 1 from Variovorax paradoxus (strain S110).